Reading from the N-terminus, the 155-residue chain is Endoribonuclease YbeY (155 aa).

3 residues coordinate Zn(2+): His-114, His-118, and His-124.

It belongs to the endoribonuclease YbeY family. Zn(2+) is required as a cofactor.

The protein resides in the cytoplasm. In terms of biological role, single strand-specific metallo-endoribonuclease involved in late-stage 70S ribosome quality control and in maturation of the 3' terminus of the 16S rRNA. The polypeptide is Endoribonuclease YbeY (Tolumonas auensis (strain DSM 9187 / NBRC 110442 / TA 4)).